The following is a 94-amino-acid chain: Small ribosomal subunit protein uS19 (94 aa).

It belongs to the universal ribosomal protein uS19 family.

Protein S19 forms a complex with S13 that binds strongly to the 16S ribosomal RNA. The sequence is that of Small ribosomal subunit protein uS19 from Clostridium novyi (strain NT).